A 464-amino-acid chain; its full sequence is Siroheme synthase (464 aa).

Residues 1 to 203 are precorrin-2 dehydrogenase /sirohydrochlorin ferrochelatase; it reads MEYLPLFHNL…GQGAEAERLL (203 aa). Residues 22 to 23 and 43 to 44 contribute to the NAD(+) site; these read EI and PE. Position 128 is a phosphoserine (Ser128). Residues 216-464 are uroporphyrinogen-III C-methyltransferase; the sequence is GEVYLVGAGP…AWFEGAQSEV (249 aa). Position 225 (Pro225) interacts with S-adenosyl-L-methionine. The active-site Proton acceptor is the Asp248. The active-site Proton donor is the Lys270. S-adenosyl-L-methionine contacts are provided by residues 301 to 303, Ile306, 331 to 332, Met383, and Gly412; these read GGD and TA.

In the N-terminal section; belongs to the precorrin-2 dehydrogenase / sirohydrochlorin ferrochelatase family. This sequence in the C-terminal section; belongs to the precorrin methyltransferase family.

It carries out the reaction uroporphyrinogen III + 2 S-adenosyl-L-methionine = precorrin-2 + 2 S-adenosyl-L-homocysteine + H(+). It catalyses the reaction precorrin-2 + NAD(+) = sirohydrochlorin + NADH + 2 H(+). The enzyme catalyses siroheme + 2 H(+) = sirohydrochlorin + Fe(2+). It participates in cofactor biosynthesis; adenosylcobalamin biosynthesis; precorrin-2 from uroporphyrinogen III: step 1/1. The protein operates within cofactor biosynthesis; adenosylcobalamin biosynthesis; sirohydrochlorin from precorrin-2: step 1/1. It functions in the pathway porphyrin-containing compound metabolism; siroheme biosynthesis; precorrin-2 from uroporphyrinogen III: step 1/1. Its pathway is porphyrin-containing compound metabolism; siroheme biosynthesis; siroheme from sirohydrochlorin: step 1/1. It participates in porphyrin-containing compound metabolism; siroheme biosynthesis; sirohydrochlorin from precorrin-2: step 1/1. Its function is as follows. Multifunctional enzyme that catalyzes the SAM-dependent methylations of uroporphyrinogen III at position C-2 and C-7 to form precorrin-2 via precorrin-1. Then it catalyzes the NAD-dependent ring dehydrogenation of precorrin-2 to yield sirohydrochlorin. Finally, it catalyzes the ferrochelation of sirohydrochlorin to yield siroheme. This is Siroheme synthase from Pseudomonas fluorescens (strain ATCC BAA-477 / NRRL B-23932 / Pf-5).